A 260-amino-acid polypeptide reads, in one-letter code: 3'-5' ssDNA/RNA exonuclease TatD (260 aa).

A divalent metal cation-binding residues include Glu92, His128, and His153.

This sequence belongs to the metallo-dependent hydrolases superfamily. TatD-type hydrolase family. TatD subfamily. Monomer. It depends on Mg(2+) as a cofactor.

The protein resides in the cytoplasm. 3'-5' exonuclease that prefers single-stranded DNA and RNA. May play a role in the H(2)O(2)-induced DNA damage repair. This Pectobacterium parmentieri (strain WPP163) (Pectobacterium wasabiae (strain WPP163)) protein is 3'-5' ssDNA/RNA exonuclease TatD.